Reading from the N-terminus, the 244-residue chain is Putative ABC transporter ATP-binding protein gll0289 (244 aa).

Positions 5–237 (LVVEELHYSY…RVLLETHGLE (233 aa)) constitute an ABC transporter domain. 38–45 (GPNGSGKS) serves as a coordination point for ATP.

This sequence belongs to the ABC transporter superfamily.

The protein localises to the cell inner membrane. Its function is as follows. Probably part of an ABC transporter complex. Responsible for energy coupling to the transport system. This Gloeobacter violaceus (strain ATCC 29082 / PCC 7421) protein is Putative ABC transporter ATP-binding protein gll0289.